The chain runs to 207 residues: Outer-membrane lipoprotein LolB (207 aa).

The first 21 residues, 1–21, serve as a signal peptide directing secretion; the sequence is MPLPDFRLIRLLPLAALVLTA. The N-palmitoyl cysteine moiety is linked to residue cysteine 22. A lipid anchor (S-diacylglycerol cysteine) is attached at cysteine 22.

It belongs to the LolB family. In terms of assembly, monomer.

Its subcellular location is the cell outer membrane. Plays a critical role in the incorporation of lipoproteins in the outer membrane after they are released by the LolA protein. The sequence is that of Outer-membrane lipoprotein LolB from Escherichia coli (strain SMS-3-5 / SECEC).